A 137-amino-acid polypeptide reads, in one-letter code: Small ribosomal subunit protein uS12 (137 aa).

Asp89 carries the post-translational modification 3-methylthioaspartic acid. A disordered region spans residues 104–137; that stretch reads TAGVNGRKQSRSKYGAKRPKPGQAAAAPAKGKKK. Basic residues predominate over residues 111–123; that stretch reads KQSRSKYGAKRPK. Residues 124–137 show a composition bias toward low complexity; it reads PGQAAAAPAKGKKK.

It belongs to the universal ribosomal protein uS12 family. As to quaternary structure, part of the 30S ribosomal subunit. Contacts proteins S8 and S17. May interact with IF1 in the 30S initiation complex.

With S4 and S5 plays an important role in translational accuracy. Its function is as follows. Interacts with and stabilizes bases of the 16S rRNA that are involved in tRNA selection in the A site and with the mRNA backbone. Located at the interface of the 30S and 50S subunits, it traverses the body of the 30S subunit contacting proteins on the other side and probably holding the rRNA structure together. The combined cluster of proteins S8, S12 and S17 appears to hold together the shoulder and platform of the 30S subunit. The polypeptide is Small ribosomal subunit protein uS12 (Cytophaga hutchinsonii (strain ATCC 33406 / DSM 1761 / CIP 103989 / NBRC 15051 / NCIMB 9469 / D465)).